A 374-amino-acid polypeptide reads, in one-letter code: 4-hydroxy-3-methylbut-2-en-1-yl diphosphate synthase (flavodoxin) (374 aa).

Residues Cys268, Cys271, Cys303, and Glu310 each coordinate [4Fe-4S] cluster.

The protein belongs to the IspG family. The cofactor is [4Fe-4S] cluster.

It catalyses the reaction (2E)-4-hydroxy-3-methylbut-2-enyl diphosphate + oxidized [flavodoxin] + H2O + 2 H(+) = 2-C-methyl-D-erythritol 2,4-cyclic diphosphate + reduced [flavodoxin]. It functions in the pathway isoprenoid biosynthesis; isopentenyl diphosphate biosynthesis via DXP pathway; isopentenyl diphosphate from 1-deoxy-D-xylulose 5-phosphate: step 5/6. Converts 2C-methyl-D-erythritol 2,4-cyclodiphosphate (ME-2,4cPP) into 1-hydroxy-2-methyl-2-(E)-butenyl 4-diphosphate. The chain is 4-hydroxy-3-methylbut-2-en-1-yl diphosphate synthase (flavodoxin) from Geobacillus kaustophilus (strain HTA426).